The following is an 83-amino-acid chain: Neurotoxin-1'' (83 aa).

The N-terminal stretch at 1-19 (MNYLVMISLALLLMIGVES) is a signal peptide. One can recognise an LCN-type CS-alpha/beta domain in the interval 21 to 82 (RDGYIVYPNN…PIKDTSRKCT (62 aa)). 4 disulfide bridges follow: Cys31-Cys81, Cys35-Cys53, Cys39-Cys63, and Cys43-Cys65. Position 83 (Arg83) is a propeptide, removed by a carboxypeptidase (in neurotoxin-1/1').

This sequence belongs to the long (4 C-C) scorpion toxin superfamily. Sodium channel inhibitor family. Alpha subfamily. Expressed by the venom gland.

The protein localises to the secreted. Functionally, alpha toxins bind voltage-independently at site-3 of sodium channels (Nav) and inhibit the inactivation of the activated channels, thereby blocking neuronal transmission. Is active against mammals and binds with high affinity rat brain synaptosomes. The protein is Neurotoxin-1'' of Androctonus australis (Sahara scorpion).